Consider the following 527-residue polypeptide: Berberine bridge enzyme-like 14 (527 aa).

A signal peptide spans 1 to 23 (MKSSTTQTLIFTVFLLLIPTSFA). A disulfide bridge connects residues cysteine 35 and cysteine 96. N-linked (GlcNAc...) asparagine glycans are attached at residues asparagine 47, asparagine 72, asparagine 161, asparagine 296, asparagine 328, asparagine 396, and asparagine 481. Positions 74–249 (TTRKPVAIVA…LAWKIKLVPV (176 aa)) constitute an FAD-binding PCMH-type domain. A cross-link (6-(S-cysteinyl)-8alpha-(pros-histidyl)-FAD (His-Cys)) is located at residues 111–174 (HDYDGMSYLS…NLRGFPAGIC (64 aa)).

The protein belongs to the oxygen-dependent FAD-linked oxidoreductase family. The cofactor is FAD. Post-translationally, the FAD cofactor is bound via a bicovalent 6-S-cysteinyl, 8alpha-N1-histidyl FAD linkage.

It localises to the secreted. The protein localises to the cell wall. The chain is Berberine bridge enzyme-like 14 from Arabidopsis thaliana (Mouse-ear cress).